Here is a 238-residue protein sequence, read N- to C-terminus: Ribonuclease 3 (238 aa).

The region spanning 8–135 (VAELERRIGY…LIAALYIDGG (128 aa)) is the RNase III domain. Residue Glu-48 coordinates Mg(2+). Asp-52 is an active-site residue. Residues Asp-121 and Glu-124 each contribute to the Mg(2+) site. Glu-124 is an active-site residue. The region spanning 161–230 (DPKTQLQEWV…AQCMLLKREG (70 aa)) is the DRBM domain.

It belongs to the ribonuclease III family. As to quaternary structure, homodimer. Mg(2+) serves as cofactor.

Its subcellular location is the cytoplasm. The enzyme catalyses Endonucleolytic cleavage to 5'-phosphomonoester.. Its function is as follows. Digests double-stranded RNA. Involved in the processing of primary rRNA transcript to yield the immediate precursors to the large and small rRNAs (23S and 16S). Processes some mRNAs, and tRNAs when they are encoded in the rRNA operon. Processes pre-crRNA and tracrRNA of type II CRISPR loci if present in the organism. The sequence is that of Ribonuclease 3 from Phenylobacterium zucineum (strain HLK1).